The chain runs to 746 residues: Exostosin-1 (746 aa).

Residues 1-7 (MQAKKRY) are Cytoplasmic-facing. A helical; Signal-anchor for type II membrane protein membrane pass occupies residues 8 to 28 (FILLSAGSCLALLFYFGGVQF). The Lumenal segment spans residues 29 to 746 (RASRSHSRRE…RKKYRDIERL (718 aa)). An N-linked (GlcNAc...) asparagine glycan is attached at Asn89. Disulfide bonds link Cys98–Cys103 and Cys109–Cys152. A protein is bound by residues Leu166 and Tyr203. Residues Lys267, Lys269, Tyr271, and Arg280 each coordinate UDP. A disulfide bridge connects residues Cys298 and Cys312. His300 lines the a protein pocket. UDP contacts are provided by Tyr319 and Tyr324. Asn330 carries an N-linked (GlcNAc...) asparagine glycan. Disulfide bonds link Cys334–Cys355 and Cys652–Cys704. Residues Arg346 and Glu349 each contribute to the UDP site.

The protein belongs to the glycosyltransferase 47 family. As to quaternary structure, part of the heparan sulfate polymerase, a dimeric complex composed of EXT1 and EXT2. Could also form homooligomeric complexes. Interacts with NDST1. In terms of processing, N-glycosylated.

It is found in the golgi apparatus membrane. It localises to the golgi apparatus. The protein resides in the cis-Golgi network membrane. The protein localises to the endoplasmic reticulum membrane. It catalyses the reaction 3-O-{alpha-D-GlcNAc-[(1-&gt;4)-beta-D-GlcA-(1-&gt;4)-alpha-D-GlcNAc](n)-(1-&gt;4)-beta-D-GlcA-(1-&gt;3)-beta-D-Gal-(1-&gt;3)-beta-D-Gal-(1-&gt;4)-beta-D-Xyl}-L-seryl-[protein] + UDP-alpha-D-glucuronate = 3-O-{[(1-&gt;4)-beta-D-GlcA-(1-&gt;4)-alpha-D-GlcNAc](n+1)-(1-&gt;4)-beta-D-GlcA-(1-&gt;3)-beta-D-Gal-(1-&gt;3)-beta-D-Gal-(1-&gt;4)-beta-D-Xyl}-L-seryl-[protein] + UDP + H(+). It functions in the pathway protein modification; protein glycosylation. Glycosyltransferase forming with EXT2 the heterodimeric heparan sulfate polymerase which catalyzes the elongation of the heparan sulfate glycan backbone. Glycan backbone extension consists in the alternating transfer of (1-&gt;4)-beta-D-GlcA and (1-&gt;4)-alpha-D-GlcNAc residues from their respective UDP-sugar donors. Both EXT1 and EXT2 are required for the full activity of the polymerase since EXT1 bears the N-acetylglucosaminyl-proteoglycan 4-beta-glucuronosyltransferase activity within the complex while EXT2 carries the glucuronosyl-N-acetylglucosaminyl-proteoglycan 4-alpha-N-acetylglucosaminyltransferase activity. Heparan sulfate proteoglycans are ubiquitous components of the extracellular matrix and play an important role in tissue homeostasis and signaling. This chain is Exostosin-1, found in Mus musculus (Mouse).